We begin with the raw amino-acid sequence, 273 residues long: MQLEKIQSDVEDIWKNRSKLSNRSVKRAARVIIKKVIKLLDSGKIRVAERLSDGKWIVHTWIKQAISLYFLTEESKMIDHTGWWFDKVNNKFDGWNEEEFHQSKIRAVPGCFVRQSAYVGTNVVLMPSFINVGAYISSGTMIDTWSTIGSCAQIGKNCHVSGGVGIGGVLEPIQASPVIIEDNCFIGARSEVAEGVIIREGSVLGMGVFIGASTKIIDRETNKVFYGEVPPYSVVVPGSTLSANNISIYCAIIVKKVDEKTRQKTSINEILRD.

The substrate site is built by Arg-106 and Asp-143.

Belongs to the transferase hexapeptide repeat family. In terms of assembly, homotrimer.

Its subcellular location is the cytoplasm. The catalysed reaction is (S)-2,3,4,5-tetrahydrodipicolinate + succinyl-CoA + H2O = (S)-2-succinylamino-6-oxoheptanedioate + CoA. The protein operates within amino-acid biosynthesis; L-lysine biosynthesis via DAP pathway; LL-2,6-diaminopimelate from (S)-tetrahydrodipicolinate (succinylase route): step 1/3. The polypeptide is 2,3,4,5-tetrahydropyridine-2,6-dicarboxylate N-succinyltransferase (Wolbachia sp. subsp. Brugia malayi (strain TRS)).